The primary structure comprises 350 residues: S-adenosylmethionine:tRNA ribosyltransferase-isomerase (350 aa).

This sequence belongs to the QueA family. As to quaternary structure, monomer.

Its subcellular location is the cytoplasm. It catalyses the reaction 7-aminomethyl-7-carbaguanosine(34) in tRNA + S-adenosyl-L-methionine = epoxyqueuosine(34) in tRNA + adenine + L-methionine + 2 H(+). It participates in tRNA modification; tRNA-queuosine biosynthesis. In terms of biological role, transfers and isomerizes the ribose moiety from AdoMet to the 7-aminomethyl group of 7-deazaguanine (preQ1-tRNA) to give epoxyqueuosine (oQ-tRNA). The sequence is that of S-adenosylmethionine:tRNA ribosyltransferase-isomerase from Vibrio vulnificus (strain CMCP6).